The primary structure comprises 144 residues: Large ribosomal subunit protein uL16 (144 aa).

Residues 1-19 (MLLPKRVKYRRQHRPKTTG) are compositionally biased toward basic residues. The disordered stretch occupies residues 1-23 (MLLPKRVKYRRQHRPKTTGRSKG).

This sequence belongs to the universal ribosomal protein uL16 family. As to quaternary structure, part of the 50S ribosomal subunit.

Its function is as follows. Binds 23S rRNA and is also seen to make contacts with the A and possibly P site tRNAs. This chain is Large ribosomal subunit protein uL16, found in Staphylococcus saprophyticus subsp. saprophyticus (strain ATCC 15305 / DSM 20229 / NCIMB 8711 / NCTC 7292 / S-41).